A 258-amino-acid polypeptide reads, in one-letter code: Chaperone protein FaeE (258 aa).

A signal peptide spans 1-34 (MSKRNAVTTFFTNRVTKALGMTLALMMTCQSAMA). The disordered stretch occupies residues 239–258 (KKPAAPEAAKAEKADTAEQK). The span at 247–258 (AKAEKADTAEQK) shows a compositional bias: basic and acidic residues.

The protein belongs to the periplasmic pilus chaperone family.

It localises to the periplasm. Its function is as follows. Mediates assembly of pili by forming soluble multimeric complexes with pili subunits as an intermediate step in the assembly process. This protein is involved in K88 pili assembly. Protects pilin protein from proteolytic degradation by DegP and from premature polymerization. The chain is Chaperone protein FaeE (faeE) from Escherichia coli.